A 448-amino-acid polypeptide reads, in one-letter code: Maltoporin (448 aa).

An N-terminal signal peptide occupies residues 1-25 (MMITLRKLPLAVAVMAGIFAAQASA).

Belongs to the porin LamB (TC 1.B.3) family. In terms of assembly, homotrimer formed of three 18-stranded antiparallel beta-barrels, containing three independent channels.

Its subcellular location is the cell outer membrane. The enzyme catalyses beta-maltose(in) = beta-maltose(out). Functionally, involved in the transport of maltose and maltodextrins. This chain is Maltoporin, found in Cronobacter sakazakii (strain ATCC BAA-894) (Enterobacter sakazakii).